The sequence spans 97 residues: Glutamyl-tRNA(Gln) amidotransferase subunit C 2 (97 aa).

Belongs to the GatC family. Heterotrimer of A, B and C subunits.

It catalyses the reaction L-glutamyl-tRNA(Gln) + L-glutamine + ATP + H2O = L-glutaminyl-tRNA(Gln) + L-glutamate + ADP + phosphate + H(+). It carries out the reaction L-aspartyl-tRNA(Asn) + L-glutamine + ATP + H2O = L-asparaginyl-tRNA(Asn) + L-glutamate + ADP + phosphate + 2 H(+). Its function is as follows. Allows the formation of correctly charged Asn-tRNA(Asn) or Gln-tRNA(Gln) through the transamidation of misacylated Asp-tRNA(Asn) or Glu-tRNA(Gln) in organisms which lack either or both of asparaginyl-tRNA or glutaminyl-tRNA synthetases. The reaction takes place in the presence of glutamine and ATP through an activated phospho-Asp-tRNA(Asn) or phospho-Glu-tRNA(Gln). The chain is Glutamyl-tRNA(Gln) amidotransferase subunit C 2 (gatC2) from Clostridium acetobutylicum (strain ATCC 824 / DSM 792 / JCM 1419 / IAM 19013 / LMG 5710 / NBRC 13948 / NRRL B-527 / VKM B-1787 / 2291 / W).